The primary structure comprises 244 residues: 5-oxoprolinase subunit A (244 aa).

It belongs to the LamB/PxpA family. As to quaternary structure, forms a complex composed of PxpA, PxpB and PxpC.

The enzyme catalyses 5-oxo-L-proline + ATP + 2 H2O = L-glutamate + ADP + phosphate + H(+). Functionally, catalyzes the cleavage of 5-oxoproline to form L-glutamate coupled to the hydrolysis of ATP to ADP and inorganic phosphate. The sequence is that of 5-oxoprolinase subunit A from Salmonella paratyphi A (strain ATCC 9150 / SARB42).